The chain runs to 72 residues: Translation initiation factor IF-1 1 (72 aa).

One can recognise an S1-like domain in the interval Met-1–Lys-72.

The protein belongs to the IF-1 family. As to quaternary structure, component of the 30S ribosomal translation pre-initiation complex which assembles on the 30S ribosome in the order IF-2 and IF-3, IF-1 and N-formylmethionyl-tRNA(fMet); mRNA recruitment can occur at any time during PIC assembly.

Its subcellular location is the cytoplasm. Its function is as follows. One of the essential components for the initiation of protein synthesis. Stabilizes the binding of IF-2 and IF-3 on the 30S subunit to which N-formylmethionyl-tRNA(fMet) subsequently binds. Helps modulate mRNA selection, yielding the 30S pre-initiation complex (PIC). Upon addition of the 50S ribosomal subunit IF-1, IF-2 and IF-3 are released leaving the mature 70S translation initiation complex. In Polynucleobacter asymbioticus (strain DSM 18221 / CIP 109841 / QLW-P1DMWA-1) (Polynucleobacter necessarius subsp. asymbioticus), this protein is Translation initiation factor IF-1 1.